A 1112-amino-acid polypeptide reads, in one-letter code: Constitutive coactivator of PPAR-gamma-like protein 1 (1112 aa).

The segment at 339-403 is interaction with YES1, SRC and FYN; it reads PPHYLARPNP…YSLSEPALTL (65 aa). Positions 372–525 are disordered; sequence QAKPAVPQVP…GKGSHMGTVQ (154 aa). Composition is skewed to polar residues over residues 403 to 418 and 433 to 445; these read LDTSGKNLTEQNSYSN and SPINLAQSGSPNH. Basic and acidic residues predominate over residues 479–500; that stretch reads GWEKTGSHAEPLARGDPGDQVK. Positions 503–512 are enriched in polar residues; it reads GSSTASSGSQ. Thr-653 carries the phosphothreonine modification. The segment at 827 to 1112 is RNA binding; that stretch reads AEQAAKVEKM…LEAAVLNKEE (286 aa). Omega-N-methylarginine occurs at positions 871, 882, and 884. Residues 919-943 form a disordered region; that stretch reads AFSGSDSSRTSKSQGGVQPIPSQGG. Positions 922–934 are enriched in polar residues; it reads GSDSSRTSKSQGG. Lys-930 carries the post-translational modification N6-acetyllysine. Phosphoserine is present on Ser-958. Omega-N-methylarginine occurs at positions 980 and 984. 2 positions are modified to phosphoserine: Ser-1021 and Ser-1042. The interval 1030-1090 is disordered; the sequence is KSKSGESKSS…PCNTNPHLNA (61 aa). Over residues 1070–1090 the composition is skewed to polar residues; the sequence is HSESALNNDSKPCNTNPHLNA.

It belongs to the constitutive coactivator of PPAR-gamma family. As to quaternary structure, interacts with PURA. Interacts with SRC family protein kinases YES1, SRC and FYN. Upon tyrosine phosphorylation, interacts with PIK3R1. Interacts with IGF2BP1/IMP-1 in an RNA-dependent manner. Arg-980 is dimethylated, probably to asymmetric dimethylarginine. In terms of processing, phosphorylated on tyrosine by src family kinases upon ultraviolet exposure. In terms of tissue distribution, in the brain, predominantly expressed in the hippocampus, caudate putamen, cerebral cortex and cerebellum. Expression is restricted to neurons (at protein level).

It localises to the cytoplasm. The protein localises to the cell membrane. Its function is as follows. Component of the oxidative stress-induced survival signaling. May regulate the activation of SRC family protein kinases. May act as a scaffolding protein enabling SRC family protein kinases to phosphorylate and activate PI3-kinase. Binds IGF2 RNA and promotes the production of IGF2 protein. In Mus musculus (Mouse), this protein is Constitutive coactivator of PPAR-gamma-like protein 1 (FAM120A).